Here is a 188-residue protein sequence, read N- to C-terminus: Putative manganese efflux pump MntP (188 aa).

Transmembrane regions (helical) follow at residues 3–23 (LSAT…ASIG), 41–61 (LIFG…GMLA), 62–82 (SQFV…FLGG), 107–129 (LLVT…LAFL), 143–163 (ATFL…PLLG), and 168–188 (ILGG…HFAG).

Belongs to the MntP (TC 9.B.29) family.

It localises to the cell inner membrane. In terms of biological role, probably functions as a manganese efflux pump. The protein is Putative manganese efflux pump MntP of Klebsiella pneumoniae (strain 342).